The chain runs to 331 residues: Aspartate carbamoyltransferase catalytic subunit (331 aa).

Carbamoyl phosphate is bound by residues Arg76 and Thr77. Lys104 provides a ligand contact to L-aspartate. Positions 126, 154, and 157 each coordinate carbamoyl phosphate. L-aspartate is bound by residues Arg187 and Arg246. The carbamoyl phosphate site is built by Gly287 and Pro288.

This sequence belongs to the aspartate/ornithine carbamoyltransferase superfamily. ATCase family. In terms of assembly, heterododecamer (2C3:3R2) of six catalytic PyrB chains organized as two trimers (C3), and six regulatory PyrI chains organized as three dimers (R2).

The enzyme catalyses carbamoyl phosphate + L-aspartate = N-carbamoyl-L-aspartate + phosphate + H(+). It participates in pyrimidine metabolism; UMP biosynthesis via de novo pathway; (S)-dihydroorotate from bicarbonate: step 2/3. In terms of biological role, catalyzes the condensation of carbamoyl phosphate and aspartate to form carbamoyl aspartate and inorganic phosphate, the committed step in the de novo pyrimidine nucleotide biosynthesis pathway. The protein is Aspartate carbamoyltransferase catalytic subunit of Dehalococcoides mccartyi (strain CBDB1).